Here is a 445-residue protein sequence, read N- to C-terminus: Transcriptional enhancer factor TEF-4 (445 aa).

Disordered regions lie at residues 1–47 (MGDP…VWSP) and 191–217 (PPASDLPGYEPPPALSPLPPPAPSPPA). Gly residues predominate over residues 25 to 37 (EGTGGSEGVGGDG). Residues 38-114 (SPDAEGVWSP…QVLARRKSRE (77 aa)) constitute a DNA-binding region (TEA). Residues 172-445 (WNVPDVKPFS…QYHIYRLVRD (274 aa)) are transcriptional activation. Residues 199 to 216 (YEPPPALSPLPPPAPSPP) are compositionally biased toward pro residues.

Interacts with YAP1 and WWTR1/TAZ. As to expression, highest expression in brain. High levels also found in lung, testis and ovarian follicle cells. Lower levels in heart and spleen.

The protein resides in the nucleus. Transcription factor which plays a key role in the Hippo signaling pathway, a pathway involved in organ size control and tumor suppression by restricting proliferation and promoting apoptosis. The core of this pathway is composed of a kinase cascade wherein MST1/MST2, in complex with its regulatory protein SAV1, phosphorylates and activates LATS1/2 in complex with its regulatory protein MOB1, which in turn phosphorylates and inactivates YAP1 oncoprotein and WWTR1/TAZ. Acts by mediating gene expression of YAP1 and WWTR1/TAZ, thereby regulating cell proliferation, migration and epithelial mesenchymal transition (EMT) induction. Binds to the SPH and GT-IIC 'enhansons' (5'-GTGGAATGT-3'). May be involved in the gene regulation of neural development. Binds to the M-CAT motif. This chain is Transcriptional enhancer factor TEF-4 (Tead2), found in Mus musculus (Mouse).